Here is a 128-residue protein sequence, read N- to C-terminus: Large ribosomal subunit protein bL20c (128 aa).

This sequence belongs to the bacterial ribosomal protein bL20 family.

It is found in the plastid. It localises to the chloroplast. Its function is as follows. Binds directly to 23S ribosomal RNA and is necessary for the in vitro assembly process of the 50S ribosomal subunit. It is not involved in the protein synthesizing functions of that subunit. The chain is Large ribosomal subunit protein bL20c from Gossypium barbadense (Sea Island cotton).